Consider the following 145-residue polypeptide: Putative transcriptional regulatory protein PYRAB13000 (145 aa).

This sequence belongs to the Tfx family.

Its function is as follows. Putative transcriptional regulator. This chain is Putative transcriptional regulatory protein PYRAB13000, found in Pyrococcus abyssi (strain GE5 / Orsay).